Consider the following 131-residue polypeptide: Photosystem II reaction center Psb28 protein (131 aa).

The disordered stretch occupies residues Asn110–Ala131. The span at Leu112–Ala125 shows a compositional bias: polar residues.

The protein belongs to the Psb28 family. In terms of assembly, part of the photosystem II complex.

The protein resides in the cellular thylakoid membrane. The chain is Photosystem II reaction center Psb28 protein from Synechococcus sp. (strain CC9902).